The sequence spans 1369 residues: Rho-associated protein kinase 1 (1369 aa).

Ser-2 carries the post-translational modification N-acetylserine. The Protein kinase domain maps to 76 to 338; that stretch reads YEVVKVIGRG…VEEIKRHLFF (263 aa). ATP contacts are provided by residues 82 to 90 and Lys-105; that span reads IGRGAFGEV. Catalysis depends on Asp-198, which acts as the Proton acceptor. An AGC-kinase C-terminal domain is found at 341-409; sequence DQWAWETLRD…YSNRRYLPSA (69 aa). Residues 368–727 are interaction with FHOD1; it reads FDDLEEDKGD…KKLKEEREAR (360 aa). Residues 422–692 are a coiled coil; it reads KNVQESLQKT…RLEQEVNEHK (271 aa). Positions 479 to 556 constitute an REM-1 domain; that stretch reads SAVSQIEKEK…LEEANDLLRT (78 aa). Residues 707 to 946 form an SHROOM3 binding region; the sequence is EAKSVAMCEM…TVSRLEEANN (240 aa). The RhoBD domain maps to 949–1015; the sequence is TKDIELLRKE…LAEIMNRKDF (67 aa). The tract at residues 998-1010 is RHOA binding; the sequence is LKTQAVNKLAEIM. The stretch at 1011–1102 forms a coiled coil; sequence NRKDFKIDRK…KLLDLSDSTS (92 aa). Phosphoserine is present on residues Ser-1105 and Ser-1108. The segment at 1115 to 1369 is auto-inhibitory; it reads NLPVGSACIP…VVKNTSGKTS (255 aa). The PH domain maps to 1133–1332; sequence SSRIEGWLSV…WVTHLVKKIP (200 aa). The segment at 1243-1298 adopts a Phorbol-ester/DAG-type zinc-finger fold; sequence GHEFIPTLYHFPANCEACAKPLWHVFKPPPALECRRCHVKSHRDHLDKKEDLIPPC. Phosphoserine is present on Ser-1343.

The protein belongs to the protein kinase superfamily. AGC Ser/Thr protein kinase family. In terms of assembly, homodimer. Interacts with GEM, MYLC2B, RHOE, LIMK1, LIMK2, TSG101, CHORDC1, DAPK3, PFN1, PTEN and JIP3. Interacts with FHOD1 in a Src-dependent manner. Interacts with ITGB1BP1 (via N-terminus and PTB domain). Interacts with RHOA (activated by GTP), RHOB, RHOC and PPP1R12A. Interacts with SHROOM3. Mg(2+) is required as a cofactor. Post-translationally, autophosphorylated on serine and threonine residues. Cleaved by caspase-3 during apoptosis. This leads to constitutive activation of the kinase and membrane blebbing. In terms of tissue distribution, highly expressed in brain, spleen, lung, liver, skeletal muscle, kidney and testis.

It is found in the cytoplasm. The protein resides in the cytoskeleton. It localises to the microtubule organizing center. Its subcellular location is the centrosome. The protein localises to the centriole. It is found in the golgi apparatus membrane. The protein resides in the cell projection. It localises to the bleb. Its subcellular location is the cell membrane. The protein localises to the lamellipodium. It is found in the ruffle. It catalyses the reaction L-seryl-[protein] + ATP = O-phospho-L-seryl-[protein] + ADP + H(+). The enzyme catalyses L-threonyl-[protein] + ATP = O-phospho-L-threonyl-[protein] + ADP + H(+). Its activity is regulated as follows. Activated by RHOA binding. Inhibited by Y-27632. Its function is as follows. Protein kinase which is a key regulator of the actin cytoskeleton and cell polarity. Involved in regulation of smooth muscle contraction, actin cytoskeleton organization, stress fiber and focal adhesion formation, neurite retraction, cell adhesion and motility via phosphorylation of DAPK3, GFAP, LIMK1, LIMK2, MYL9/MLC2, TPPP, PFN1 and PPP1R12A. Phosphorylates FHOD1 and acts synergistically with it to promote SRC-dependent non-apoptotic plasma membrane blebbing. Phosphorylates JIP3 and regulates the recruitment of JNK to JIP3 upon UVB-induced stress. Acts as a suppressor of inflammatory cell migration by regulating PTEN phosphorylation and stability. Acts as a negative regulator of VEGF-induced angiogenic endothelial cell activation. Required for centrosome positioning and centrosome-dependent exit from mitosis. Plays a role in terminal erythroid differentiation. Inhibits podocyte motility via regulation of actin cytoskeletal dynamics and phosphorylation of CFL1. Promotes keratinocyte terminal differentiation. Involved in osteoblast compaction through the fibronectin fibrillogenesis cell-mediated matrix assembly process, essential for osteoblast mineralization. May regulate closure of the eyelids and ventral body wall by inducing the assembly of actomyosin bundles. The sequence is that of Rho-associated protein kinase 1 (Rock1) from Rattus norvegicus (Rat).